The chain runs to 459 residues: Exodeoxyribonuclease 7 large subunit (459 aa).

Belongs to the XseA family. As to quaternary structure, heterooligomer composed of large and small subunits.

The protein resides in the cytoplasm. It catalyses the reaction Exonucleolytic cleavage in either 5'- to 3'- or 3'- to 5'-direction to yield nucleoside 5'-phosphates.. Functionally, bidirectionally degrades single-stranded DNA into large acid-insoluble oligonucleotides, which are then degraded further into small acid-soluble oligonucleotides. The polypeptide is Exodeoxyribonuclease 7 large subunit (Pseudomonas entomophila (strain L48)).